The primary structure comprises 527 residues: Protein TIC 56, chloroplastic (527 aa).

Residues 1–48 (MSSMNFNPFQNWFEKPPNPVPSINFVSLADSFFPKSQSPNFASIGLPK) constitute a chloroplast transit peptide. The disordered stretch occupies residues 43 to 67 (SIGLPKFSKKSPKPETAGTDEPGPY). Deamidated asparagine is present on Asn-350. The segment covering 491 to 508 (RREEELREEDLKHYSGRT) has biased composition (basic and acidic residues). Residues 491–527 (RREEELREEDLKHYSGRTDEDEEEEEEEDDDSNSKKD) are disordered. The span at 509–521 (DEDEEEEEEEDDD) shows a compositional bias: acidic residues.

As to quaternary structure, part of the Tic complex. Component of the 1-MD complex, composed of TIC20-I, TIC214, TIC100 and TIC56. Interacts with the translocating preproteins. Hydrolysis of ATP is essential for the formation of this complex. The 1-MD complex interacts with TIC21.

It is found in the plastid. The protein localises to the chloroplast inner membrane. In terms of biological role, involved in protein precursor import into chloroplasts. May be part of an intermediate translocation complex acting as a protein-conducting channel at the inner envelope. This is Protein TIC 56, chloroplastic from Arabidopsis thaliana (Mouse-ear cress).